The sequence spans 227 residues: Phosphoglycolate phosphatase (227 aa).

Asp11 acts as the Nucleophile in catalysis. Mg(2+)-binding residues include Asp11, Asp13, and Asp176.

The protein belongs to the HAD-like hydrolase superfamily. CbbY/CbbZ/Gph/YieH family. Mg(2+) serves as cofactor.

The enzyme catalyses 2-phosphoglycolate + H2O = glycolate + phosphate. It participates in organic acid metabolism; glycolate biosynthesis; glycolate from 2-phosphoglycolate: step 1/1. Specifically catalyzes the dephosphorylation of 2-phosphoglycolate. Is involved in the dissimilation of the intracellular 2-phosphoglycolate formed during the DNA repair of 3'-phosphoglycolate ends, a major class of DNA lesions induced by oxidative stress. This Aliivibrio fischeri (strain ATCC 700601 / ES114) (Vibrio fischeri) protein is Phosphoglycolate phosphatase.